The primary structure comprises 85 residues: MLGSVLTRRSSSGSDNRVFVYEVEGLRQNEQTDNNRYQIRNSSTIEIQVPYSRMNEEDRRITRLGGRIVNIRPAGENPTEDASEN.

Positions 16 to 74 (NRVFVYEVEGLRQNEQTDNNRYQIRNSSTIEIQVPYSRMNEEDRRITRLGGRIVNIRPA) constitute a CpcD-like domain.

This sequence belongs to the phycobilisome linker protein family.

The protein resides in the cellular thylakoid membrane. Its function is as follows. Rod linker protein, associated with phycocyanin. Linker polypeptides determine the state of aggregation and the location of the disk-shaped phycobiliprotein units within the phycobilisome and modulate their spectroscopic properties in order to mediate a directed and optimal energy transfer. This Microchaete diplosiphon (Fremyella diplosiphon) protein is Phycobilisome 9.7 kDa linker polypeptide, phycocyanin-associated, rod (cpcD2).